The sequence spans 86 residues: Large ribosomal subunit protein eL43 (86 aa).

Residues 38 to 60 form a C4-type zinc finger; the sequence is CPFCGHKGKVYRLSTGVWACKKC.

This sequence belongs to the eukaryotic ribosomal protein eL43 family. Zn(2+) is required as a cofactor.

In Desulfurococcus amylolyticus (strain DSM 18924 / JCM 16383 / VKM B-2413 / 1221n) (Desulfurococcus kamchatkensis), this protein is Large ribosomal subunit protein eL43.